The sequence spans 882 residues: Protein translocase subunit SecA (882 aa).

ATP is bound by residues glutamine 79, glycine 97–threonine 101, and aspartate 487.

The protein belongs to the SecA family.

It is found in the plastid. It localises to the chloroplast stroma. The protein resides in the chloroplast thylakoid membrane. The catalysed reaction is ATP + H2O + cellular proteinSide 1 = ADP + phosphate + cellular proteinSide 2.. In terms of biological role, has a central role in coupling the hydrolysis of ATP to the transfer of proteins across the thylakoid membrane. The chain is Protein translocase subunit SecA from Gracilaria tenuistipitata var. liui (Red alga).